A 474-amino-acid polypeptide reads, in one-letter code: Sporulation-specific protein 6 (474 aa).

The 54-residue stretch at 125 to 178 (RLAFPNFIFYFDNVDEEIKRRVTQKINNLGAKVATLFTFEVTHFITTRTTDPEM) folds into the BRCT domain. The segment at 421 to 470 (IETKSGYCENCCERYKDLERHLGGKHHRRFAEKDENFQGLDDLFLLIRRP) adopts a DBF4-type zinc-finger fold. Positions 428, 431, 441, and 447 each coordinate Zn(2+).

It is found in the nucleus. Functionally, may act as a kinase regulator. Essential for progression of meiosis II and sporulation. The protein is Sporulation-specific protein 6 (spo6) of Schizosaccharomyces pombe (strain 972 / ATCC 24843) (Fission yeast).